Reading from the N-terminus, the 463-residue chain is MTIGLSVTNDVFARDILTVAQLNQAVGQLLERSIPSLWVRGEISNFTQAASGHWYFTLKDSRAAVRTVMFRSRAAQVGFVPRPGDQVEVRARVSLYEPRGDYQLQADGMRRAGVGNLYEAFLRLKAQLQDEGLFDPQRKRQPARLPRAIGVVTSLHAAALRDVLSALARRAPQVPVIIYPAPVQGADAAARLAARVAQANQRAEVDTLLLVRGGGSIEDLWSFNDEALAREVAASDIPVISGVGHETDFTIVDFVADLRAPTPTAAAELACVPRGDLLAALRHTAEWLARAQQRRLDQAAQRLDRAAAMLTSPAQRLAHQQERLNTLRHRLASAWRGPQGHRVARLDMLAQRLAHRRPDTGRAAERSAALLAQLGRAQARLAAARQARLDTLAAQLRALDPQHTLARGYAIVRDAAGAIVTDATRLAARDRIEIAVARGRIGADVTDIGTPDGTDGNPALRRG.

The protein belongs to the XseA family. Heterooligomer composed of large and small subunits.

It is found in the cytoplasm. The catalysed reaction is Exonucleolytic cleavage in either 5'- to 3'- or 3'- to 5'-direction to yield nucleoside 5'-phosphates.. Functionally, bidirectionally degrades single-stranded DNA into large acid-insoluble oligonucleotides, which are then degraded further into small acid-soluble oligonucleotides. The polypeptide is Exodeoxyribonuclease 7 large subunit (Bordetella pertussis (strain Tohama I / ATCC BAA-589 / NCTC 13251)).